Consider the following 356-residue polypeptide: Geranylgeranyl pyrophosphate synthase penG (356 aa).

3 residues coordinate isopentenyl diphosphate: Lys-83, Arg-86, and His-115. Mg(2+)-binding residues include Asp-122 and Asp-126. Arg-131 contributes to the dimethylallyl diphosphate binding site. Arg-132 contacts isopentenyl diphosphate. Dimethylallyl diphosphate contacts are provided by Lys-209, Thr-210, and Gln-243. Asp-246 lines the Mg(2+) pocket. Dimethylallyl diphosphate is bound by residues Asn-250, Lys-260, and Lys-270.

This sequence belongs to the FPP/GGPP synthase family. Mg(2+) serves as cofactor.

It catalyses the reaction isopentenyl diphosphate + dimethylallyl diphosphate = (2E)-geranyl diphosphate + diphosphate. The enzyme catalyses isopentenyl diphosphate + (2E)-geranyl diphosphate = (2E,6E)-farnesyl diphosphate + diphosphate. The catalysed reaction is isopentenyl diphosphate + (2E,6E)-farnesyl diphosphate = (2E,6E,10E)-geranylgeranyl diphosphate + diphosphate. Its pathway is secondary metabolite biosynthesis. Its function is as follows. Geranylgeranyl pyrophosphate synthase; part of the gene cluster that mediates the biosynthesis of the indole diterpenes penitrems. The geranylgeranyl diphosphate (GGPP) synthase ptmG catalyzes the first step in penitrem biosynthesis via conversion of farnesyl pyrophosphate and isopentyl pyrophosphate into geranylgeranyl pyrophosphate (GGPP). Condensation of indole-3-glycerol phosphate with GGPP by the prenyl transferase ptmC then forms 3-geranylgeranylindole (3-GGI). Epoxidation by the FAD-dependent monooxygenase ptmM leads to a epoxidized-GGI that is substrate of the terpene cyclase ptmB for cyclization to yield paspaline. Paspaline is subsequently converted to 13-desoxypaxilline by the cytochrome P450 monooxygenase ptmP, the latter being then converted to paxilline by the cytochrome P450 monooxygenase ptmQ. Paxilline is converted to beta-paxitriol via C-10 ketoreduction by the short-chain dehydrogenase ptmH which can be monoprenylated at the C-20 by the indole diterpene prenyltransferase ptmD. A two-step elimination (acetylation and elimination) process performed by the O-acetyltransferase ptmV and ptmI leads to the production of the prenylated form of penijanthine. The FAD-linked oxidoreductase ptmO then converts the prenylated form of penijanthine into PC-M5 which is in turn transformed into PC-M4 by the aromatic dimethylallyltransferase ptmE. Five sequential oxidative transformations performed by the cytochrome P450 monooxygenases ptmK, ptmU, ptmL, ptmN and ptmJ yield the various penitrem compounds. PtmK, ptmU and ptmM are involved in the formation of the key bicyclic ring of penitrem C via the formation of the intermediates secopenitrem D and penitrem D. PtmL catalyzes the epoxidation of penitrem D and C to yield penitrem B and F, respectively. PtmJ catalyzes the last benzylic hydroxylation to convert penitrem B to prenitrem E and penitrem F to penitrem A. This Penicillium ochrochloron protein is Geranylgeranyl pyrophosphate synthase penG.